The sequence spans 499 residues: Histidine ammonia-lyase (499 aa).

Residues 142–144 (ASG) constitute a cross-link (5-imidazolinone (Ala-Gly)). Ser-143 carries the post-translational modification 2,3-didehydroalanine (Ser).

It belongs to the PAL/histidase family. In terms of processing, contains an active site 4-methylidene-imidazol-5-one (MIO), which is formed autocatalytically by cyclization and dehydration of residues Ala-Ser-Gly.

It localises to the cytoplasm. The catalysed reaction is L-histidine = trans-urocanate + NH4(+). Its pathway is amino-acid degradation; L-histidine degradation into L-glutamate; N-formimidoyl-L-glutamate from L-histidine: step 1/3. In Staphylococcus saprophyticus subsp. saprophyticus (strain ATCC 15305 / DSM 20229 / NCIMB 8711 / NCTC 7292 / S-41), this protein is Histidine ammonia-lyase.